Consider the following 685-residue polypeptide: ATP-dependent permease MDL1 (685 aa).

Polar residues predominate over residues phenylalanine 48–serine 70. The interval phenylalanine 48–arginine 76 is disordered. An N-linked (GlcNAc...) asparagine glycan is attached at asparagine 63. A helical transmembrane segment spans residues leucine 96 to leucine 116. The ABC transmembrane type-1 domain occupies isoleucine 97–lysine 407. The tract at residues threonine 125–aspartate 147 is disordered. Residues aspartate 129–aspartate 141 show a composition bias toward acidic residues. The helical transmembrane segment at phenylalanine 158–leucine 180 threads the bilayer. Residue asparagine 239 is glycosylated (N-linked (GlcNAc...) asparagine). The chain crosses the membrane as a helical span at residues leucine 266–tyrosine 282. N-linked (GlcNAc...) asparagine glycosylation is present at asparagine 336. 2 consecutive transmembrane segments (helical) span residues glycine 353–alanine 373 and leucine 381–phenylalanine 401. The region spanning isoleucine 440–lysine 680 is the ABC transporter domain. Glycine 475–serine 482 lines the ATP pocket. N-linked (GlcNAc...) asparagine glycosylation is found at asparagine 553 and asparagine 576.

The protein belongs to the ABC transporter superfamily. ABCB family. Mitochondrial peptide exporter (TC 3.A.1.212) subfamily.

The protein resides in the membrane. The polypeptide is ATP-dependent permease MDL1 (MDL1) (Candida albicans (Yeast)).